The following is a 369-amino-acid chain: Flagellar P-ring protein (369 aa).

The first 22 residues, 1–22 (MLNFKHLMAAALLLSTSLGVQA), serve as a signal peptide directing secretion.

Belongs to the FlgI family. In terms of assembly, the basal body constitutes a major portion of the flagellar organelle and consists of four rings (L,P,S, and M) mounted on a central rod.

Its subcellular location is the periplasm. It localises to the bacterial flagellum basal body. Its function is as follows. Assembles around the rod to form the L-ring and probably protects the motor/basal body from shearing forces during rotation. The chain is Flagellar P-ring protein from Pseudomonas fluorescens (strain ATCC BAA-477 / NRRL B-23932 / Pf-5).